The primary structure comprises 479 residues: Anaerobic nitric oxide reductase flavorubredoxin (479 aa).

The interval 30-210 is zinc metallo-hydrolase; sequence LRGSSYNSYL…PFSRLVTPKI (181 aa). Fe cation contacts are provided by His79, Glu81, Asp83, His147, Asp166, and His227. The region spanning 254–393 is the Flavodoxin-like domain; the sequence is ITIFYDTMSN…LCRQHGRDIA (140 aa). Residues 260–264 and 342–369 contribute to the FMN site; these read TMSNN and AFGS…EMSL. A Rubredoxin-like domain is found at 423–474; it reads GPKMQCSVCQWIYDPALGEPLQDVAPGTPWSDVPDNFLCPECSLGKDVFDVL. Fe cation-binding residues include Cys428, Cys431, Cys461, and Cys464.

It in the N-terminal section; belongs to the zinc metallo-hydrolase group 3 family. Homotetramer. Fe cation is required as a cofactor. It depends on FMN as a cofactor.

It is found in the cytoplasm. Its pathway is nitrogen metabolism; nitric oxide reduction. Anaerobic nitric oxide reductase; uses NADH to detoxify nitric oxide (NO), protecting several 4Fe-4S NO-sensitive enzymes. Has at least 2 reductase partners, only one of which (NorW, flavorubredoxin reductase) has been identified. NO probably binds to the di-iron center; electrons enter from the NorW at rubredoxin and are transferred sequentially to the FMN center and the di-iron center. Also able to function as an aerobic oxygen reductase. In Salmonella arizonae (strain ATCC BAA-731 / CDC346-86 / RSK2980), this protein is Anaerobic nitric oxide reductase flavorubredoxin.